A 40-amino-acid polypeptide reads, in one-letter code: Snaclec tokaracetin subunit beta (40 aa).

Cysteines 2 and 13 form a disulfide. The C-type lectin domain occupies 9–40; it reads YDEHCYRVFQQKMNWEDAEKFCTQQHKGXHLX.

Belongs to the snaclec family. Heterodimer of subunits alpha and beta; disulfide-linked. In terms of tissue distribution, expressed by the venom gland.

Its subcellular location is the secreted. Platelet antagonist that specifically and reversibly binds to a site on platelet glycoprotein Ibalpha (GP1BA) close to or identical with the site for vWF binding. It inhibits the binding of vWF to platelets and vWF-dependent shear-induced platelet aggregation. The polypeptide is Snaclec tokaracetin subunit beta (Protobothrops tokarensis (Tokara habu)).